A 675-amino-acid polypeptide reads, in one-letter code: UvrABC system protein B (675 aa).

The Helicase ATP-binding domain maps to 30–417; it reads SGIEQGNRNQ…SDQIVEQVVR (388 aa). 43–50 provides a ligand contact to ATP; it reads GVTGSGKT. Residues 96-119 carry the Beta-hairpin motif; the sequence is YYDYYQPEAYVPSSDTFIEKDAAI. Residues 434–601 enclose the Helicase C-terminal domain; the sequence is QVDDVLSEIN…AVRQKVKEID (168 aa). Positions 637-672 constitute a UVR domain; that stretch reads AKHMSKLEKEMLKASKELQFEQAARLRDEILRLKAQ.

This sequence belongs to the UvrB family. In terms of assembly, forms a heterotetramer with UvrA during the search for lesions. Interacts with UvrC in an incision complex.

It is found in the cytoplasm. Functionally, the UvrABC repair system catalyzes the recognition and processing of DNA lesions. A damage recognition complex composed of 2 UvrA and 2 UvrB subunits scans DNA for abnormalities. Upon binding of the UvrA(2)B(2) complex to a putative damaged site, the DNA wraps around one UvrB monomer. DNA wrap is dependent on ATP binding by UvrB and probably causes local melting of the DNA helix, facilitating insertion of UvrB beta-hairpin between the DNA strands. Then UvrB probes one DNA strand for the presence of a lesion. If a lesion is found the UvrA subunits dissociate and the UvrB-DNA preincision complex is formed. This complex is subsequently bound by UvrC and the second UvrB is released. If no lesion is found, the DNA wraps around the other UvrB subunit that will check the other stand for damage. The sequence is that of UvrABC system protein B from Acinetobacter baylyi (strain ATCC 33305 / BD413 / ADP1).